We begin with the raw amino-acid sequence, 126 residues long: Cytochrome c2 (126 aa).

Heme c-binding residues include Cys-17, Cys-20, His-21, and Met-101.

It belongs to the cytochrome c family. In terms of processing, binds 1 heme c group covalently per subunit.

The protein resides in the periplasm. Functionally, cytochrome c2 is found mainly in purple, non-sulfur, photosynthetic bacteria where it functions as the electron donor to the oxidized bacteriochlorophyll in the photophosphorylation pathway. However, it may also have a role in the respiratory chain and is found in some non-photosynthetic bacteria. The chain is Cytochrome c2 from Rhodovulum adriaticum (Rhodopseudomonas adriatica).